The chain runs to 356 residues: 5-formaminoimidazole-4-carboxamide-1-(beta)-D-ribofuranosyl 5'-monophosphate synthetase (356 aa).

Positions 27 and 94 each coordinate 5-amino-1-(5-phospho-beta-D-ribosyl)imidazole-4-carboxamide. In terms of domain architecture, ATP-grasp spans 101–333 (TENFAELTVP…YADLIQEDLS (233 aa)). ATP contacts are provided by residues 145 to 196 (PRDI…TRYY) and Glu-226. Asn-255 contributes to the 5-amino-1-(5-phospho-beta-D-ribosyl)imidazole-4-carboxamide binding site. Glu-293 and Glu-306 together coordinate Mg(2+).

The protein belongs to the phosphohexose mutase family. Mg(2+) is required as a cofactor. It depends on Mn(2+) as a cofactor.

The enzyme catalyses 5-amino-1-(5-phospho-beta-D-ribosyl)imidazole-4-carboxamide + formate + ATP = 5-formamido-1-(5-phospho-D-ribosyl)imidazole-4-carboxamide + ADP + phosphate. The protein operates within purine metabolism; IMP biosynthesis via de novo pathway; 5-formamido-1-(5-phospho-D-ribosyl)imidazole-4-carboxamide from 5-amino-1-(5-phospho-D-ribosyl)imidazole-4-carboxamide (formate route): step 1/1. Functionally, catalyzes the ATP- and formate-dependent formylation of 5-aminoimidazole-4-carboxamide-1-beta-d-ribofuranosyl 5'-monophosphate (AICAR) to 5-formaminoimidazole-4-carboxamide-1-beta-d-ribofuranosyl 5'-monophosphate (FAICAR) in the absence of folates. In Methanosarcina acetivorans (strain ATCC 35395 / DSM 2834 / JCM 12185 / C2A), this protein is 5-formaminoimidazole-4-carboxamide-1-(beta)-D-ribofuranosyl 5'-monophosphate synthetase.